Consider the following 199-residue polypeptide: Streptomycin biosynthesis protein StrG (199 aa).

Its pathway is antibiotic biosynthesis; streptomycin biosynthesis. In terms of biological role, may be involved in the formation of N-methyl-L-glucosamine. The polypeptide is Streptomycin biosynthesis protein StrG (strG) (Streptomyces griseus).